The following is a 567-amino-acid chain: Major facilitator superfamily transporter MG061 (567 aa).

12 helical membrane passes run 15-35, 78-98, 104-124, 193-213, 230-250, 264-284, 321-341, 363-383, 405-425, 426-446, 462-482, and 503-523; these read ITLW…WFVI, WTIT…VLKF, VLIM…GDPL, GYAL…TLVV, ILSN…FTPF, VYIM…FLWF, LIGV…PAWF, TGLA…FVVF, IVVL…SAAG, FALI…LSSS, LPIL…LFDI, and PGVI…NLIV.

The protein belongs to the major facilitator superfamily.

Its subcellular location is the cell membrane. The protein is Major facilitator superfamily transporter MG061 of Mycoplasma genitalium (strain ATCC 33530 / DSM 19775 / NCTC 10195 / G37) (Mycoplasmoides genitalium).